The primary structure comprises 364 residues: Fructose-bisphosphate aldolase B (364 aa).

Substrate is bound by residues Arg-56 and Lys-147. Catalysis depends on Glu-188, which acts as the Proton acceptor. The active-site Schiff-base intermediate with dihydroxyacetone-P is Lys-230.

This sequence belongs to the class I fructose-bisphosphate aldolase family. Homotetramer.

The protein localises to the cytoplasm. It localises to the cytoskeleton. Its subcellular location is the microtubule organizing center. The protein resides in the centrosome. It is found in the centriolar satellite. It carries out the reaction beta-D-fructose 1,6-bisphosphate = D-glyceraldehyde 3-phosphate + dihydroxyacetone phosphate. It functions in the pathway carbohydrate degradation; glycolysis; D-glyceraldehyde 3-phosphate and glycerone phosphate from D-glucose: step 4/4. The sequence is that of Fructose-bisphosphate aldolase B (aldob) from Sparus aurata (Gilthead sea bream).